We begin with the raw amino-acid sequence, 787 residues long: Endonuclease MutS2 (787 aa).

329–336 (GPNTGGKT) provides a ligand contact to ATP. The region spanning 712 to 787 (INLLGCTVDE…DAGVTIVDFK (76 aa)) is the Smr domain.

This sequence belongs to the DNA mismatch repair MutS family. MutS2 subfamily. Homodimer. Binds to stalled ribosomes, contacting rRNA.

Its function is as follows. Endonuclease that is involved in the suppression of homologous recombination and thus may have a key role in the control of bacterial genetic diversity. Acts as a ribosome collision sensor, splitting the ribosome into its 2 subunits. Detects stalled/collided 70S ribosomes which it binds and splits by an ATP-hydrolysis driven conformational change. Acts upstream of the ribosome quality control system (RQC), a ribosome-associated complex that mediates the extraction of incompletely synthesized nascent chains from stalled ribosomes and their subsequent degradation. Probably generates substrates for RQC. In Lachnospira eligens (strain ATCC 27750 / DSM 3376 / VPI C15-48 / C15-B4) (Eubacterium eligens), this protein is Endonuclease MutS2.